Consider the following 498-residue polypeptide: Protein flp (498 aa).

Helical transmembrane passes span 6-26, 389-409, 433-453, and 471-491; these read LYFLSISIIILVAISIAIYIT, FNIVTVLMTTLILLAFIFSAY, LSLCICIALALILYALPYLIL, and LALITTLIALFSTLIVILLFL.

The protein localises to the cell membrane. Its precise function is unknown. Has no penicillin-binding activity and is not involved in methicillin resistance. The chain is Protein flp (flp) from Staphylococcus aureus (strain NCTC 8325 / PS 47).